A 445-amino-acid polypeptide reads, in one-letter code: Glucose-6-phosphate isomerase (445 aa).

Glutamate 284 (proton donor) is an active-site residue. Catalysis depends on residues histidine 305 and lysine 419.

The protein belongs to the GPI family.

The protein localises to the cytoplasm. It catalyses the reaction alpha-D-glucose 6-phosphate = beta-D-fructose 6-phosphate. It participates in carbohydrate biosynthesis; gluconeogenesis. Its pathway is carbohydrate degradation; glycolysis; D-glyceraldehyde 3-phosphate and glycerone phosphate from D-glucose: step 2/4. Functionally, catalyzes the reversible isomerization of glucose-6-phosphate to fructose-6-phosphate. The sequence is that of Glucose-6-phosphate isomerase from Leptospira interrogans serogroup Icterohaemorrhagiae serovar Lai (strain 56601).